The sequence spans 264 residues: Acid phosphatase (264 aa).

The first 28 residues, 1–28, serve as a signal peptide directing secretion; the sequence is MIKVPRFICMIALTSGILASGLSQSVSA.

This sequence belongs to the class A bacterial acid phosphatase family. Requires Mg(2+) as cofactor. The cofactor is Zn(2+).

The protein resides in the periplasm. The enzyme catalyses a phosphate monoester + H2O = an alcohol + phosphate. This chain is Acid phosphatase (phoC), found in Zymomonas mobilis subsp. mobilis (strain ATCC 31821 / ZM4 / CP4).